Consider the following 362-residue polypeptide: Peptide chain release factor 1 (362 aa).

The residue at position 237 (Gln237) is an N5-methylglutamine. Positions 282-296 (QQEEDKRRAEADSTR) are enriched in basic and acidic residues. Residues 282–304 (QQEEDKRRAEADSTRRSILSTGD) are disordered.

It belongs to the prokaryotic/mitochondrial release factor family. Methylated by PrmC. Methylation increases the termination efficiency of RF1.

It is found in the cytoplasm. Its function is as follows. Peptide chain release factor 1 directs the termination of translation in response to the peptide chain termination codons UAG and UAA. This is Peptide chain release factor 1 from Tolumonas auensis (strain DSM 9187 / NBRC 110442 / TA 4).